The primary structure comprises 143 residues: D-aminoacyl-tRNA deacylase (143 aa).

The Gly-cisPro motif, important for rejection of L-amino acids signature appears at 135–136 (GP).

The protein belongs to the DTD family. In terms of assembly, homodimer.

Its subcellular location is the cytoplasm. The catalysed reaction is glycyl-tRNA(Ala) + H2O = tRNA(Ala) + glycine + H(+). The enzyme catalyses a D-aminoacyl-tRNA + H2O = a tRNA + a D-alpha-amino acid + H(+). Functionally, an aminoacyl-tRNA editing enzyme that deacylates mischarged D-aminoacyl-tRNAs. Also deacylates mischarged glycyl-tRNA(Ala), protecting cells against glycine mischarging by AlaRS. Acts via tRNA-based rather than protein-based catalysis; rejects L-amino acids rather than detecting D-amino acids in the active site. By recycling D-aminoacyl-tRNA to D-amino acids and free tRNA molecules, this enzyme counteracts the toxicity associated with the formation of D-aminoacyl-tRNA entities in vivo and helps enforce protein L-homochirality. The polypeptide is D-aminoacyl-tRNA deacylase (Mycobacterium marinum (strain ATCC BAA-535 / M)).